Consider the following 508-residue polypeptide: MSVQVAAPGSTGLGPERLNPEELVRQTRQVVQGLEALRAEHHSLAGHLAEALAGPGPVAGVELLEEKQQVVNHSLEAIELGLGEAQVLLALSAHVSVLEAEKQRLRAQARRLAQENTWLREELEETQRRLRASEEAVAQLEEEKSHLQFLGQLRQYDPPEESQRPESPPRRDSLASLFPSEEEEKKGPEAAGAAAAQQGGYEIPARLRTLHNLVIQYAGQGRYEVAVPLCRQALEDLERSSGHCHPDVATMLNILALVYRDQNKYKEATELLHDALQIREQTLGPEHPAVAATLNNLAVLYGKRGRYREAEPLCQRALEIREKVLGADHPDVAKQLNNLALLCQNQGKFQDVERHYARALSIYEALGGPQDPNVAKTKNNLASAYLKQNKYQQAEELYKEILSQEALPAPLGAPQGGTAGDTQQQVLRRSSSFSKLRESIRRGSEKLVSRLRGEGMAGAAGMKRAMSLNMLNVDGPRAARTQLSQLSTRHLSEAPRTLSISTQDLSPR.

A disordered region spans residues 1–20 (MSVQVAAPGSTGLGPERLNP). Positions 88–150 (LLALSAHVSV…EEEKSHLQFL (63 aa)) form a coiled coil. The tract at residues 154–197 (RQYDPPEESQRPESPPRRDSLASLFPSEEEEKKGPEAAGAAAAQ) is disordered. The span at 161–173 (ESQRPESPPRRDS) shows a compositional bias: basic and acidic residues. Ser-173 carries the post-translational modification Phosphoserine. TPR repeat units follow at residues 207–240 (LRTL…LERS), 249–282 (ATML…REQT), 291–324 (AATL…REKV), 333–366 (AKQL…YEAL), and 375–408 (AKTK…EALP). A disordered region spans residues 409–441 (APLGAPQGGTAGDTQQQVLRRSSSFSKLRESIR). The segment covering 420 to 434 (GDTQQQVLRRSSSFS) has biased composition (polar residues). A Phosphoserine modification is found at Ser-467. The disordered stretch occupies residues 486–508 (LSTRHLSEAPRTLSISTQDLSPR). Residues 498–508 (LSISTQDLSPR) show a composition bias toward polar residues. Residue Thr-502 is modified to Phosphothreonine. At Ser-506 the chain carries Phosphoserine.

The protein belongs to the kinesin light chain family. In terms of assembly, oligomer composed of two heavy chains and two light chains. Associates with microtubulin in an ATP-dependent manner. Interacts with KIF5C. Interacts with ODF1. Interacts with LRGUK. Interacts with VDAC2. Expressed in postmeiotic male germ cells (at protein level). Expressed in the testes (at protein level). Expressed in spleen, intestine, brain and ovary.

The protein localises to the cytoplasm. It localises to the cytoskeleton. It is found in the mitochondrion. Kinesin is a microtubule-associated force-producing protein that may play a role in organelle transport. Plays a role during spermiogenesis in the development of the sperm tail midpiece and in the normal function of spermatozoa. May play a role in the formation of the mitochondrial sheath formation in the developing spermatid midpiece. The sequence is that of Kinesin light chain 3 (Klc3) from Mus musculus (Mouse).